Consider the following 329-residue polypeptide: DNA-directed RNA polymerase subunit alpha (329 aa).

The tract at residues 1-235 is alpha N-terminal domain (alpha-NTD); that stretch reads MQGSVTEFLK…EQLDAFVDLR (235 aa). Residues 249 to 329 form an alpha C-terminal domain (alpha-CTD) region; that stretch reads FDPILLRPVD…NWPPASIAED (81 aa).

The protein belongs to the RNA polymerase alpha chain family. Homodimer. The RNAP catalytic core consists of 2 alpha, 1 beta, 1 beta' and 1 omega subunit. When a sigma factor is associated with the core the holoenzyme is formed, which can initiate transcription.

The catalysed reaction is RNA(n) + a ribonucleoside 5'-triphosphate = RNA(n+1) + diphosphate. DNA-dependent RNA polymerase catalyzes the transcription of DNA into RNA using the four ribonucleoside triphosphates as substrates. The polypeptide is DNA-directed RNA polymerase subunit alpha (Aliivibrio fischeri (strain ATCC 700601 / ES114) (Vibrio fischeri)).